Here is a 413-residue protein sequence, read N- to C-terminus: Serine hydroxymethyltransferase (413 aa).

Residues L119 and 123–125 (GHL) each bind (6S)-5,6,7,8-tetrahydrofolate. K228 carries the N6-(pyridoxal phosphate)lysine modification. A (6S)-5,6,7,8-tetrahydrofolate-binding site is contributed by 351-353 (SPF).

This sequence belongs to the SHMT family. As to quaternary structure, homodimer. It depends on pyridoxal 5'-phosphate as a cofactor.

The protein resides in the cytoplasm. The catalysed reaction is (6R)-5,10-methylene-5,6,7,8-tetrahydrofolate + glycine + H2O = (6S)-5,6,7,8-tetrahydrofolate + L-serine. Its pathway is one-carbon metabolism; tetrahydrofolate interconversion. It participates in amino-acid biosynthesis; glycine biosynthesis; glycine from L-serine: step 1/1. Catalyzes the reversible interconversion of serine and glycine with tetrahydrofolate (THF) serving as the one-carbon carrier. This reaction serves as the major source of one-carbon groups required for the biosynthesis of purines, thymidylate, methionine, and other important biomolecules. Also exhibits THF-independent aldolase activity toward beta-hydroxyamino acids, producing glycine and aldehydes, via a retro-aldol mechanism. In Clostridium botulinum (strain 657 / Type Ba4), this protein is Serine hydroxymethyltransferase.